The primary structure comprises 589 residues: Probable galacturonosyltransferase 6 (589 aa).

Topologically, residues 1–6 (MKQIRR) are cytoplasmic. A helical; Signal-anchor for type II membrane protein membrane pass occupies residues 7-27 (WQRILILALLSISVFAPLIFV). Over 28 to 589 (SNRLKSITPV…TYLQQCNLQA (562 aa)) the chain is Lumenal. Residues N83 and N126 are each glycosylated (N-linked (GlcNAc...) asparagine). Residues 127 to 151 (KTDFKPPLSKGEKNTRVQPDRATDV) are disordered. The segment covering 136 to 151 (KGEKNTRVQPDRATDV) has biased composition (basic and acidic residues). N-linked (GlcNAc...) asparagine glycans are attached at residues N317 and N454.

Belongs to the glycosyltransferase 8 family. Expressed in roots, inflorescences, siliques, leaves and stems.

It is found in the golgi apparatus membrane. It participates in glycan metabolism; pectin biosynthesis. In terms of biological role, probably involved in pectin biosynthesis in cell walls. The protein is Probable galacturonosyltransferase 6 (GAUT6) of Arabidopsis thaliana (Mouse-ear cress).